Here is a 196-residue protein sequence, read N- to C-terminus: Imidazoleglycerol-phosphate dehydratase (196 aa).

Belongs to the imidazoleglycerol-phosphate dehydratase family.

It is found in the cytoplasm. The catalysed reaction is D-erythro-1-(imidazol-4-yl)glycerol 3-phosphate = 3-(imidazol-4-yl)-2-oxopropyl phosphate + H2O. It participates in amino-acid biosynthesis; L-histidine biosynthesis; L-histidine from 5-phospho-alpha-D-ribose 1-diphosphate: step 6/9. The chain is Imidazoleglycerol-phosphate dehydratase from Desulforudis audaxviator (strain MP104C).